We begin with the raw amino-acid sequence, 329 residues long: Mitochondrial glycine transporter (329 aa).

Solcar repeat units lie at residues 19-103, 130-214, and 232-316; these read SKTT…LRQP, LSNW…LKRH, and SSSS…LILR. 6 helical membrane-spanning segments follow: residues 25–50, 78–104, 136–161, 189–212, 236–262, and 291–309; these read FAAG…TRVQ, GTLP…RQPL, LGTG…VRYE, GFGA…EQLK, INFI…KTRL, and GLGL…AWTV.

It belongs to the mitochondrial carrier (TC 2.A.29) family. SLC25A38 subfamily.

The protein localises to the mitochondrion inner membrane. It catalyses the reaction glycine(in) = glycine(out). Functionally, mitochondrial glycine transporter that imports glycine into the mitochondrial matrix. Plays an important role in providing glycine for the first enzymatic step in heme biosynthesis, the condensation of glycine with succinyl-CoA to produce 5-aminolevulinate (ALA) in the mitochondrial matrix. The sequence is that of Mitochondrial glycine transporter from Aspergillus terreus (strain NIH 2624 / FGSC A1156).